A 330-amino-acid polypeptide reads, in one-letter code: Ketol-acid reductoisomerase (NADP(+)) (330 aa).

Residues 3–184 (LSVYYDKDID…GGGRMGVLET (182 aa)) form the KARI N-terminal Rossmann domain. NADP(+) contacts are provided by residues 26 to 29 (YGTQ), S52, and S54. H109 is a catalytic residue. An NADP(+)-binding site is contributed by G135. The KARI C-terminal knotted domain occupies 185–329 (SFKEECESDL…EILRTPFNHE (145 aa)). Positions 193, 197, 229, and 233 each coordinate Mg(2+). A substrate-binding site is contributed by S254.

Belongs to the ketol-acid reductoisomerase family. The cofactor is Mg(2+).

The enzyme catalyses (2R)-2,3-dihydroxy-3-methylbutanoate + NADP(+) = (2S)-2-acetolactate + NADPH + H(+). It catalyses the reaction (2R,3R)-2,3-dihydroxy-3-methylpentanoate + NADP(+) = (S)-2-ethyl-2-hydroxy-3-oxobutanoate + NADPH + H(+). Its pathway is amino-acid biosynthesis; L-isoleucine biosynthesis; L-isoleucine from 2-oxobutanoate: step 2/4. It functions in the pathway amino-acid biosynthesis; L-valine biosynthesis; L-valine from pyruvate: step 2/4. In terms of biological role, involved in the biosynthesis of branched-chain amino acids (BCAA). Catalyzes an alkyl-migration followed by a ketol-acid reduction of (S)-2-acetolactate (S2AL) to yield (R)-2,3-dihydroxy-isovalerate. In the isomerase reaction, S2AL is rearranged via a Mg-dependent methyl migration to produce 3-hydroxy-3-methyl-2-ketobutyrate (HMKB). In the reductase reaction, this 2-ketoacid undergoes a metal-dependent reduction by NADPH to yield (R)-2,3-dihydroxy-isovalerate. This is Ketol-acid reductoisomerase (NADP(+)) from Helicobacter acinonychis (strain Sheeba).